The sequence spans 360 residues: Dual-specificity RNA methyltransferase RlmN (360 aa).

The active-site Proton acceptor is glutamate 89. A Radical SAM core domain is found at 95–330 (DSGRGTLCVS…TRVTRGQDID (236 aa)). Cysteine 102 and cysteine 333 form a disulfide bridge. Positions 109, 113, and 116 each coordinate [4Fe-4S] cluster. S-adenosyl-L-methionine is bound by residues 159 to 160 (GE), serine 191, 213 to 215 (SLH), and asparagine 290. The S-methylcysteine intermediate role is filled by cysteine 333.

Belongs to the radical SAM superfamily. RlmN family. [4Fe-4S] cluster is required as a cofactor.

It localises to the cytoplasm. It carries out the reaction adenosine(2503) in 23S rRNA + 2 reduced [2Fe-2S]-[ferredoxin] + 2 S-adenosyl-L-methionine = 2-methyladenosine(2503) in 23S rRNA + 5'-deoxyadenosine + L-methionine + 2 oxidized [2Fe-2S]-[ferredoxin] + S-adenosyl-L-homocysteine. It catalyses the reaction adenosine(37) in tRNA + 2 reduced [2Fe-2S]-[ferredoxin] + 2 S-adenosyl-L-methionine = 2-methyladenosine(37) in tRNA + 5'-deoxyadenosine + L-methionine + 2 oxidized [2Fe-2S]-[ferredoxin] + S-adenosyl-L-homocysteine. Its function is as follows. Specifically methylates position 2 of adenine 2503 in 23S rRNA and position 2 of adenine 37 in tRNAs. m2A2503 modification seems to play a crucial role in the proofreading step occurring at the peptidyl transferase center and thus would serve to optimize ribosomal fidelity. The protein is Dual-specificity RNA methyltransferase RlmN of Alkalilimnicola ehrlichii (strain ATCC BAA-1101 / DSM 17681 / MLHE-1).